An 89-amino-acid polypeptide reads, in one-letter code: Small ribosomal subunit protein uS15 (89 aa).

This sequence belongs to the universal ribosomal protein uS15 family. As to quaternary structure, part of the 30S ribosomal subunit. Forms a bridge to the 50S subunit in the 70S ribosome, contacting the 23S rRNA.

In terms of biological role, one of the primary rRNA binding proteins, it binds directly to 16S rRNA where it helps nucleate assembly of the platform of the 30S subunit by binding and bridging several RNA helices of the 16S rRNA. Forms an intersubunit bridge (bridge B4) with the 23S rRNA of the 50S subunit in the ribosome. This Corynebacterium aurimucosum (strain ATCC 700975 / DSM 44827 / CIP 107346 / CN-1) (Corynebacterium nigricans) protein is Small ribosomal subunit protein uS15.